A 4545-amino-acid polypeptide reads, in one-letter code: Prolow-density lipoprotein receptor-related protein 1 (4545 aa).

An N-terminal signal peptide occupies residues 1–19 (MLTPPLLLLLPLLSALVAG). The Extracellular portion of the chain corresponds to 20–4424 (ATMDAPKTCS…SQQQPGHMTS (4405 aa)). 2 consecutive LDL-receptor class A domains span residues 27–66 (TCSP…EICP) and 72–110 (RCPP…AHCR). 6 disulfide bridges follow: C28–C41, C35–C54, C48–C65, C73–C86, C80–C99, and C93–C109. N-linked (GlcNAc...) asparagine glycosylation is found at N115, N137, N186, N240, and N275. LDL-receptor class B repeat units lie at residues 293-335 (GNFY…DPAM), 336-379 (GKVF…DLVS), and 380-423 (RLVY…FENY). N-linked (GlcNAc...) asparagine glycosylation is present at N358. N447 is a glycosylation site (N-linked (GlcNAc...) asparagine). LDL-receptor class B repeat units lie at residues 572–614 (GFIY…DWMG), 615–660 (DNLY…DPLN), 661–711 (GWMY…DIPA), and 712–755 (GRLY…HGNY). One copy of the HAT 1 repeat lies at 639-671 (TRKTLIEGKMTHPRAIVVDPLNGWMYWTDWEED). Residue N730 is glycosylated (N-linked (GlcNAc...) asparagine). 8 consecutive LDL-receptor class A domains span residues 854–892 (QCQP…ALCH), 895–933 (TCPS…ATCS), 936–973 (TCPP…ASCA), 976–1013 (TCFP…AGCS), 1015–1053 (SCSS…ANCT), 1062–1099 (GCHS…KGCE), 1104–1142 (VCDP…ENCE), and 1145–1184 (ACRP…ELCD). Cystine bridges form between C855-C867, C862-C880, C874-C891, C896-C908, C903-C921, C915-C932, C937-C949, C944-C962, C956-C972, C977-C990, C985-C1003, C997-C1012, C1016-C1028, C1023-C1041, C1035-C1052, C1063-C1076, C1070-C1089, C1083-C1098, C1105-C1119, C1113-C1132, C1126-C1141, C1146-C1160, C1153-C1173, and C1167-C1183. Ca(2+) is bound by residues W872, D875, D877, D879, D885, and E886. N-linked (GlcNAc...) asparagine glycosylation is present at N929. Ca(2+) contacts are provided by W1033, D1036, D1038, D1040, D1046, and E1047. N1051 carries an N-linked (GlcNAc...) asparagine glycan. The Ca(2+) site is built by W1081, D1084, D1086, D1088, D1094, and E1095. N1156 is a glycosylation site (N-linked (GlcNAc...) asparagine). N-linked (GlcNAc...) asparagine glycosylation is found at N1196 and N1219. LDL-receptor class B repeat units follow at residues 1310-1356 (SALY…DWIA), 1357-1399 (GNIY…DPRD), 1400-1446 (GILF…DYLE), 1447-1491 (KRIL…YGGE), and 1492-1532 (VYWT…YHPS). HAT repeat units follow at residues 1380 to 1413 (TTLL…SLPR) and 1470 to 1503 (MEVL…NTLA). Residues N1512, N1559, N1576, N1617, and N1646 are each glycosylated (N-linked (GlcNAc...) asparagine). LDL-receptor class B repeat units follow at residues 1628–1670 (QRVY…DWVS), 1671–1714 (RNLF…HPLR), 1715–1754 (GKLY…DFPE), and 1755–1799 (SKLY…MGDK). Residues 1653–1684 (VVSADLPNAHGLAVDWVSRNLFWTSYDTNKKQ) form an HAT 4 repeat. 5 N-linked (GlcNAc...) asparagine glycosylation sites follow: N1724, N1734, N1764, N1826, and N1934. 4 LDL-receptor class B repeats span residues 1935–1977 (DTIY…DWIA), 1978–2020 (GNIY…HPEK), 2021–2064 (GYLF…DYQG), and 2065–2108 (GKLY…FEDF). N-linked (GlcNAc...) asparagine glycosylation is present at N1996. K2010 is subject to N6-acetyllysine. N2049 is a glycosylation site (N-linked (GlcNAc...) asparagine). N-linked (GlcNAc...) asparagine glycans are attached at residues N2118 and N2128. LDL-receptor class B repeat units follow at residues 2254–2295 (NRIF…HRGW), 2296–2344 (DTLY…DECQ), 2345–2389 (NLMF…DHRA), 2390–2432 (EKLY…YGEH), and 2433–2474 (IFWT…VAND). 3 HAT repeats span residues 2277 to 2309 (TTIV…STIT), 2325 to 2358 (TVIT…LHPS), and 2411 to 2444 (HRYV…RAVQ). N-linked (GlcNAc...) asparagine glycans are attached at residues N2473, N2503, and N2522. LDL-receptor class A domains lie at 2524–2563 (SCRA…SYCN), 2566–2602 (RCKK…IPCN), 2605–2641 (ACGV…MNCS), 2639–2690 (NCSA…RDCP), 2696–2732 (RCPL…THCN), 2734–2771 (FCSE…AHCE), and 2774–2814 (TCGP…AGCL). Disulfide bonds link C2525–C2538, C2533–C2551, C2545–C2562, C2567–C2579, C2574–C2592, and C2586–C2601. The N-linked (GlcNAc...) asparagine glycan is linked to N2602. 15 disulfides stabilise this stretch: C2606–C2618, C2613–C2631, C2625–C2640, C2640–C2667, C2645–C2680, C2674–C2689, C2697–C2709, C2704–C2722, C2716–C2731, C2735–C2747, C2742–C2760, C2754–C2770, C2775–C2788, C2782–C2801, and C2795–C2813. Residues N2621 and N2639 are each glycosylated (N-linked (GlcNAc...) asparagine). Residue N2816 is glycosylated (N-linked (GlcNAc...) asparagine). LDL-receptor class A domains lie at 2818 to 2855 (TCDD…PECE), 2858 to 2899 (TCGP…PHCT), and 2904 to 2941 (KCNA…RGCH). Intrachain disulfides connect C2819/C2831, C2826/C2844, C2838/C2854, C2859/C2871, C2866/C2885, C2879/C2898, C2905/C2918, C2913/C2931, C2925/C2940, C2987/C2997, and C2993/C3006. Residue N2906 is glycosylated (N-linked (GlcNAc...) asparagine). An EGF-like 1; calcium-binding domain is found at 2983–3018 (DVDECSTTFPCSQLCINTHGSYKCLCVEGYAPRGGD). N-linked (GlcNAc...) asparagine glycosylation is found at N3049 and N3090. 5 LDL-receptor class B repeats span residues 3070 to 3114 (QMIY…DWVG), 3115 to 3157 (GNLY…DVQN), 3158 to 3201 (GYLY…DYVT), 3202 to 3244 (ERIY…FEDY), and 3245 to 3285 (VYWT…FHAL). HAT repeat units follow at residues 3128 to 3171 (EVSK…HSLI) and 3224 to 3256 (RHVV…KSIN). N-linked (GlcNAc...) asparagine glycans are attached at residues N3265 and N3334. 11 LDL-receptor class A domains span residues 3334 to 3371 (NCTA…PDCP), 3374 to 3410 (KCRP…ANCD), 3413 to 3450 (VCLP…RDCP), 3453 to 3491 (TCAP…ANCT), 3494 to 3533 (TCGV…EECD), 3536 to 3572 (TCEP…ESCT), 3575 to 3611 (PCSE…KDCT), 3613 to 3649 (RCDM…EACG), 3654 to 3692 (TCPL…EECT), 3695 to 3733 (QCPP…EDCE), and 3741 to 3778 (HCKD…EDCS). Cystine bridges form between C3335–C3347, C3342–C3360, C3354–C3370, C3375–C3387, C3382–C3400, C3394–C3409, C3414–C3427, C3421–C3440, C3434–C3449, C3454–C3467, C3461–C3480, C3474–C3490, C3495–C3508, C3502–C3521, C3515–C3532, C3537–C3549, C3544–C3562, C3556–C3571, C3576–C3588, C3583–C3601, C3595–C3610, C3614–C3626, C3621–C3639, C3633–C3648, C3655–C3667, C3662–C3680, C3674–C3691, C3696–C3710, C3704–C3723, C3717–C3732, C3742–C3755, C3750–C3768, and C3762–C3777. The N-linked (GlcNAc...) asparagine glycan is linked to N3489. A glycan (N-linked (GlcNAc...) asparagine) is linked at N3663. 2 N-linked (GlcNAc...) asparagine glycosylation sites follow: N3789 and N3840. Residues 3913–3925 (GRVYWTNWHTGTI) form an LDL-receptor class B 31 repeat. N-linked (GlcNAc...) asparagine glycosylation is present at N3954. 3 LDL-receptor class B repeats span residues 3971–4013 (GNVY…DPLR), 4014–4057 (GTMY…DYHN), and 4058–4102 (ERLY…FEDY). The stretch at 3995 to 4027 (TLISGMIDEPHAIVVDPLRGTMYWSDWGNHPKI) is one HAT 10 repeat. 3 N-linked (GlcNAc...) asparagine glycosylation sites follow: N4076, N4126, and N4180. EGF-like domains lie at 4197-4230 (RPGT…YTGD), 4233-4269 (ELDQ…PRCT), 4270-4302 (QQVC…FLGD), and 4305-4341 (QYRQ…TRCE). Cystine bridges form between C4201-C4211, C4205-C4221, C4237-C4247, C4241-C4257, C4259-C4268, C4273-C4283, C4277-C4293, C4309-C4319, C4313-C4329, and C4331-C4340. The N-linked (GlcNAc...) asparagine glycan is linked to N4280. An N-linked (GlcNAc...) asparagine glycan is attached at N4365. In terms of domain architecture, EGF-like 6 spans 4376–4410 (LTCIDHCSNGGSCTMNSKMMPECQCPPHMTGPRCE). 3 cysteine pairs are disulfide-bonded: C4378–C4388, C4382–C4398, and C4400–C4409. The chain crosses the membrane as a helical span at residues 4425 to 4445 (ILIPLLLLLLLLLVAGVVFWY). At 4446 to 4545 (KRRVRGAKGF…PEDEIGDPLA (100 aa)) the chain is on the cytoplasmic side. Positions 4446-4545 (KRRVRGAKGF…PEDEIGDPLA (100 aa)) are interaction with MAFB. T4461 is subject to Phosphothreonine. Y4508 carries the phosphotyrosine modification. A phosphoserine mark is found at S4518, S4521, and S4524.

This sequence belongs to the LDLR family. Heterodimer of an 85-kDa membrane-bound carboxyl subunit and a non-covalently attached 515-kDa N-terminal subunit. Intracellular domain interacts with MAFB. Found in a complex with PID1/PCLI1, LRP1 and CUBNI. Interacts with SNX17, PID1/PCLI1, PDGF and CUBN. The intracellular domain interacts with SHC1, GULP1 and DAB1. Can weakly interact (via NPXY motif) with DAB2 (via PID domain); the interaction is enhanced by tyrosine phosphorylation of the NPXY motif. Interacts with MDK; promotes neuronal survival. Interacts with LRPAP1; this interaction is followed by rapid internalization. Interacts with uPA/PLAU and PAI1/SERPINE1, either individually or in complex with each other, leading to rapid endocytosis; this interaction is abolished in the presence of LRPAP1/RAP. Also interacts with tPA/PLAT alone or in complex with SERPINE1. Interacts with the urokinase receptor PLAUR; this interaction leads to PLAUR internalization and is impaired in the presence of SORL1. Interacts with PDGFB. Interacts with TAU/MAPT, leading to endocytosis; this interaction is reduced in the presence of LRPAP1/RAP. Interacts with IGFBP3. Interacts with ADGRG6. Cleaved into a 85 kDa membrane-spanning subunit (LRP-85) and a 515 kDa large extracellular domain (LRP-515) that remains non-covalently associated. Gamma-secretase-dependent cleavage of LRP-85 releases the intracellular domain from the membrane. In terms of processing, phosphorylated on serine and threonine residues. Post-translationally, phosphorylated on tyrosine residues upon stimulation with PDGF. Tyrosine phosphorylation promotes interaction with SHC1.

Its subcellular location is the cell membrane. The protein localises to the membrane. It localises to the coated pit. It is found in the golgi outpost. The protein resides in the cytoplasm. Its subcellular location is the cytoskeleton. The protein localises to the microtubule organizing center. It localises to the nucleus. In terms of biological role, endocytic receptor involved in endocytosis and in phagocytosis of apoptotic cells. Required for early embryonic development. Involved in cellular lipid homeostasis. Involved in the plasma clearance of chylomicron remnants and activated LRPAP1 (alpha 2-macroglobulin), as well as the local metabolism of complexes between plasminogen activators and their endogenous inhibitors. Acts as an LRPAP1 alpha-2-macroglobulin receptor. Acts as a TAU/MAPT receptor and controls the endocytosis of TAU/MAPT as well as its subsequent spread. May modulate cellular events, such as APP metabolism, kinase-dependent intracellular signaling, neuronal calcium signaling as well as neurotransmission. Also acts as a receptor for IGFBP3 to mediate cell growth inhibition. The protein is Prolow-density lipoprotein receptor-related protein 1 of Rattus norvegicus (Rat).